Here is a 165-residue protein sequence, read N- to C-terminus: Nucleotide-binding protein NATL1_05371 (165 aa).

This sequence belongs to the YajQ family.

Functionally, nucleotide-binding protein. This Prochlorococcus marinus (strain NATL1A) protein is Nucleotide-binding protein NATL1_05371.